The following is a 213-amino-acid chain: Bcl-2-related ovarian killer protein (213 aa).

Serine 7 is modified (phosphoserine). The segment at 15–45 is interactions with ITPR1; the sequence is MDAFDRSPTDKELVAQAKALGREYVHARLLR. Glycyl lysine isopeptide (Lys-Gly) (interchain with G-Cter in ubiquitin) cross-links involve residues lysine 25 and lysine 32. Positions 32–44 match the BH4 motif; that stretch reads KALGREYVHARLL. Residues 67–83 carry the BH3 motif; that stretch reads VCTVLLRLGDELEQIRP. The nuclear export signal stretch occupies residues 71–79; it reads LLRLGDELE. Residues 113-132 carry the BH1 motif; sequence HIFSAGITWGKVVSLYSVAA. Glycyl lysine isopeptide (Lys-Gly) (interchain with G-Cter in ubiquitin) cross-links involve residues lysine 160 and lysine 177. The short motif at 165–179 is the BH2 element; sequence WLRRRGGWTDVLKCV. The helical transmembrane segment at 190-210 threads the bilayer; that stretch reads WLVATLCSFGRFLKAAFFLLL.

This sequence belongs to the Bcl-2 family. As to quaternary structure, monomer; positively regulates apoptotic process. Homodimer. Heterodimer. Oligomer; promoted by apoptotic stimuli and BH3-only proteins; mediates constitutive activation. Interacts (via BH4 domain) with ITPR1; enhances BOK expression and stabilization; limits apoptosis and prevents ubiquitination and then degradation; protects ITPR1 from proteolysis by CASP3 during apoptosis. Interacts with ITPR2 and ITPR3; binds most strongly to ITPR2, and barely to ITPR3; regulates their expression. Interacts with XPO1; translocates to the cytoplasm. Interacts with BNIP3; promotes oligomerization. In terms of processing, ubiquitinated by AMFR/gp78 E3 ubiquitin ligase complex; mediates degradation by ubiquitin-proteasome pathway in a VCP/p97-dependent manner; prevents from proapoptotic activity; promotes degradation of newly synthesized proteins that are not ITPR1 associated. Widely expressed. Highly expressed in brain, kidney, and spleen.

The protein localises to the mitochondrion membrane. Its subcellular location is the endoplasmic reticulum membrane. It is found in the mitochondrion inner membrane. The protein resides in the cytoplasm. It localises to the nucleus. The protein localises to the mitochondrion. Its subcellular location is the endoplasmic reticulum. It is found in the mitochondrion outer membrane. The protein resides in the early endosome membrane. It localises to the recycling endosome membrane. The protein localises to the nucleus outer membrane. Its subcellular location is the golgi apparatus. It is found in the cis-Golgi network membrane. The protein resides in the trans-Golgi network membrane. It localises to the membrane. In terms of biological role, apoptosis regulator that functions through different apoptotic signaling pathways. Plays a roles as pro-apoptotic protein that positively regulates intrinsic apoptotic process in a BAX- and BAK1-dependent manner or in a BAX- and BAK1-independent manner. In response to endoplasmic reticulum stress promotes mitochondrial apoptosis through downstream BAX/BAK1 activation and positive regulation of PERK-mediated unfolded protein response. Activates apoptosis independently of heterodimerization with survival-promoting BCL2 and BCL2L1 through induction of mitochondrial outer membrane permeabilization, in a BAX- and BAK1-independent manner, in response to inhibition of ERAD-proteasome degradation system, resulting in cytochrome c release. In response to DNA damage, mediates intrinsic apoptotic process in a TP53-dependent manner. Plays a role in granulosa cell apoptosis by CASP3 activation. Plays a roles as anti-apoptotic protein during neuronal apoptotic process, by negatively regulating poly ADP-ribose polymerase-dependent cell death through regulation of neuronal calcium homeostasis and mitochondrial bioenergetics in response to NMDA excitation. In addition to its role in apoptosis, may regulate trophoblast cell proliferation during the early stages of placental development, by acting on G1/S transition through regulation of CCNE1 expression. May also play a role as an inducer of autophagy by disrupting interaction between MCL1 and BECN1. The sequence is that of Bcl-2-related ovarian killer protein from Mus musculus (Mouse).